The chain runs to 1840 residues: MDVHTRWKDRLPVGPAAVPPLLLLLLLLWAPPQSRAAQPTDLLEMLDFHNLPSGVTKTTGFCATRRSSRGPDVAYRVSKDAQLSMPRKQLYPDSDFAEDFSILTTVKAKKGSQAFLVSVYNEQGIQQVGMELGRSPVFLYEDHTGKPGPEEYPLFPGINLSDGKWHRIAISVYRKNVTLILDCKKKVVKFLNRSDHPIIDVNGIIMFGSRILDDEIFEGDIQQLLFVSDHRAAYDYCEHYSPDCDTAVPDTPQSQDPNPDEYYPEGDGETYYYEYPYYEDPEDLGKEPAPTQKPVEAARETTEVPEEQTQPPPEAPTVPETSDPAGKEDDPGFGDYDYVPTDDYYTPAPYEDLGYGEGVENPDQPTNPDSGAEVPTSTIITSNTSNPAPSPGEDKDDLGGEFTEETIKNLEENYYDPYFDPDSDSNVSPSEIGPGMPANQDTIYEGIGGPRGEKGQKGEPAIIEPGMLIEGPPGPEGPAGLPGPPGTTGPTGQVGDPGERGPPGRPGLPGADGLPGPPGTMLMLPFRFGGGGDAGSKGPMVSAQESQAQAILQQARLALRGPAGPMGLTGRPGPMGPPGSGGLKGEPGDMGPQGPRGVQGPPGPTGKPGRRGRAGSDGARGMPGQTGPKGDRGFDGLAGLPGEKGHRGDPGPSGPPGLPGDDGERGDDGEVGPRGLPGEPGPRGLLGPKGPPGPPGPPGVTGMDGQPGPKGNVGPQGEPGPPGQQGNPGAQGLPGPQGAIGPPGEKGPLGKPGLPGMPGADGPPGHPGKEGPPGEKGGQGPPGPQGPIGYPGPRGVKGADGIRGLKGTKGEKGEDGFPGFKGDMGIKGDRGEIGPPGPRGEDGPEGPKGRGGPNGDPGPLGPTGEKGKLGVPGLPGYPGRQGPKGSIGFPGFPGANGEKGGRGTPGKPGPRGQRGPTGPRGERGPRGITGKPGPKGNSGGDGPAGPPGERGPNGPQGPTGFPGPKGPPGPPGKDGLPGHPGQRGETGFQGKTGPPGPPGVVGPQGPTGETGPMGERGHPGPPGPPGEQGLPGVAGKEGTKGDPGPAGLPGKDGPPGLRGFPGDRGLPGPVGALGLKGSEGPPGPPGPAGSPGERGPAGAAGPIGIPGRPGPQGPPGPAGEKGVPGEKGPQGPAGRDGLQGPVGLPGPAGPVGPPGEDGDKGEIGEPGQKGSKGDKGEQGPPGPTGPQGPIGQPGPSGADGEPGPRGQQGLFGQKGDEGSRGFPGPPGPVGLQGLPGPPGEKGETGDVGQMGPPGPPGPRGPSGAPGADGPQGPPGGIGNPGAVGEKGEPGEAGEPGLPGEGGPLGPKGERGEKGEVGPSGAAGPPGPKGPPGDDGPKGSPGPVGFPGDPGPPGEPGPAGQDGPPGDKGDDGEPGQTGSPGPTGEPGPSGPPGKRGPPGPAGPEGRQGEKGAKGEAGLEGPPGKTGPIGPQGAPGKPGPDGLRGIPGPVGEQGLPGSPGPDGPPGPMGPPGLPGLKGDSGPKGEKGHPGLIGLIGPPGEQGEKGDRGLPGPQGSSGPKGEQGITGPSGPLGPPGPPGLPGPPGPKGAKGSSGPTGPKGEAGHPGLPGPPGPPGEVIQPLPIQASRTRRNIDASQLLDDGAGESYLDYADGMEEIFGSLNSLKLEIEQMKRPLGTQQNPARTCKDLQLCHPDFPDGEYWVDPNQGCSRDSFKVYCNFTAGGSTCVFPDKKSEGARITSWPKENPGSWFSEFKRGKLLSYVDAEGNPVGVVQMTFLRLLSASAHQNITYNCYQSVAWQDAATGSYDKAIRFLGSNDEEMSYDNNPYIRALVDGCATKKGYQKTVLEIDTPKVEQVPIVDIMFNDFGEASQKFGFEVGPACFLG.

Positions 1 to 36 (MDVHTRWKDRLPVGPAAVPPLLLLLLLLWAPPQSRA) are cleaved as a signal peptide. A Laminin G-like domain is found at 72-244 (DVAYRVSKDA…DYCEHYSPDC (173 aa)). Residues 231–445 (RAAYDYCEHY…MPANQDTIYE (215 aa)) are nonhelical region. Sulfotyrosine occurs at positions 234, 236, 240, 262, 263, and 271. 3 disordered regions span residues 242–523 (PDCD…TMLM), 528–547 (FGGG…QESQ), and 561–1576 (GPAG…EVIQ). Positions 258-268 (NPDEYYPEGDG) are enriched in acidic residues. 2 stretches are compositionally biased toward low complexity: residues 335–352 (DYDY…PYED) and 376–386 (TSTIITSNTSN). The interval 446–560 (GIGGPRGEKG…ILQQARLALR (115 aa)) is interrupted collagenous region. Over residues 472-487 (PPGPEGPAGLPGPPGT) the composition is skewed to pro residues. The segment covering 508–523 (LPGADGLPGPPGTMLM) has biased composition (low complexity). A compositionally biased stretch (low complexity) spans 561-572 (GPAGPMGLTGRP). The interval 561-1572 (GPAGPMGLTG…GLPGPPGPPG (1012 aa)) is triple-helical region. 3 positions are modified to 4-hydroxyproline: Pro572, Pro578, and Pro623. Lys629 carries the post-translational modification 5-hydroxylysine. Pro641 bears the 4-hydroxyproline mark. The residue at position 644 (Lys644) is a 5-hydroxylysine. A 4-hydroxyproline mark is found at Pro650, Pro656, Pro659, Pro677, and Pro680. Positions 673–688 (PRGLPGEPGPRGLLGP) are enriched in low complexity. Residues Pro682 and Pro688 each carry the 3-hydroxyproline modification. The segment covering 689–698 (KGPPGPPGPP) has biased composition (pro residues). 3 positions are modified to 4-hydroxyproline: Pro692, Pro698, and Pro707. Lys710 carries the post-translational modification 5-hydroxylysine. 4-hydroxyproline is present on residues Pro719, Pro722, Pro728, and Pro734. Residues 724 to 743 (QQGNPGAQGLPGPQGAIGPP) show a composition bias toward low complexity. Lys746 bears the 5-hydroxylysine mark. The segment covering 749-758 (LGKPGLPGMP) has biased composition (low complexity). Residues Pro752, Pro758, Pro764, Pro767, and Pro773 each carry the 4-hydroxyproline modification. Lys776 is modified (5-hydroxylysine). 4-hydroxyproline occurs at positions 782 and 791. 5-hydroxylysine is present on residues Lys797, Lys806, Lys809, and Lys812. Pro818 bears the 4-hydroxyproline mark. Lys821 carries the 5-hydroxylysine modification. At Pro836 the chain carries 4-hydroxyproline. Positions 839–848 (RGEDGPEGPK) are enriched in basic and acidic residues. Lys848 and Lys866 each carry 5-hydroxylysine. A 4-hydroxyproline mark is found at Pro872, Pro875, and Pro878. Residue Lys884 is modified to 5-hydroxylysine. A 4-hydroxyproline mark is found at Pro890 and Pro893. 5-hydroxylysine is present on Lys899. Pro905 and Pro908 each carry 4-hydroxyproline. The segment covering 910 to 919 (PRGQRGPTGP) has biased composition (low complexity). 2 positions are modified to 4-hydroxyproline: Pro932 and Pro947. Composition is skewed to low complexity over residues 973-992 (KDGL…QGKT) and 1001-1013 (VGPQ…TGPM). Residues Pro1019, Pro1022, Pro1025, and Pro1031 each carry the 4-hydroxyproline modification. Over residues 1090–1106 (SPGERGPAGAAGPIGIP) the composition is skewed to low complexity. Positions 1108–1117 (RPGPQGPPGP) are enriched in pro residues. Residues Pro1223 and Pro1226 each carry the 4-hydroxyproline modification. The span at 1261–1270 (PSGAPGADGP) shows a compositional bias: low complexity. Residues 1296-1305 (GLPGEGGPLG) show a composition bias toward gly residues. Pro residues-rich tracts occupy residues 1382–1400 (TGEP…PGPA) and 1456–1471 (SPGP…PPGL). 2 positions are modified to 4-hydroxyproline: Pro1469 and Pro1472. Over residues 1487–1496 (PGLIGLIGPP) the composition is skewed to low complexity. Over residues 1528-1543 (PLGPPGPPGLPGPPGP) the composition is skewed to pro residues. Low complexity predominate over residues 1544–1556 (KGAKGSSGPTGPK). Residues 1573-1607 (EVIQPLPIQASRTRRNIDASQLLDDGAGESYLDYA) form a nonhelical region region. Tyr1603 and Tyr1606 each carry sulfotyrosine. Residues 1611–1839 (EEIFGSLNSL…GFEVGPACFL (229 aa)) enclose the Fibrillar collagen NC1 domain.

The protein belongs to the fibrillar collagen family. In terms of assembly, trimers of two alpha 1(V) and one alpha 2(V) chains in most tissues and trimers of one alpha 1(V), one alpha 2(V), and one alpha 3(V) chains in placenta. Interacts with CSPG4. Post-translationally, hydroxylation on proline residues within the sequence motif, GXPG, is most likely to be 4-hydroxy as this fits the requirement for 4-hydroxylation in vertebrates. Sulfated on 40% of tyrosines. As to expression, ubiquitously expressed.

The protein resides in the secreted. It is found in the extracellular space. Its subcellular location is the extracellular matrix. Type V collagen is a member of group I collagen (fibrillar forming collagen). It is a minor connective tissue component of nearly ubiquitous distribution. Type V collagen binds to DNA, heparan sulfate, thrombospondin, heparin, and insulin. This is Collagen alpha-1(V) chain (COL5A1) from Cricetulus longicaudatus (Long-tailed dwarf hamster).